The sequence spans 149 residues: MRAVVQRVIRGEVSVDGEVISSIGKGFVVLVGISVDDNENDVMYMADKIVNLRVFEDEEGKMNLSLLDIGGEVLLVSQFTLLGDVRKGRRPNFMMAQKPEEALKYFNLLVNEIEKRGVSVKTGKFQAMMKVLIENDGPVTILIDSKKIF.

A Gly-cisPro motif, important for rejection of L-amino acids motif is present at residues 137 to 138 (GP).

This sequence belongs to the DTD family. In terms of assembly, homodimer.

The protein localises to the cytoplasm. The catalysed reaction is glycyl-tRNA(Ala) + H2O = tRNA(Ala) + glycine + H(+). The enzyme catalyses a D-aminoacyl-tRNA + H2O = a tRNA + a D-alpha-amino acid + H(+). Its function is as follows. An aminoacyl-tRNA editing enzyme that deacylates mischarged D-aminoacyl-tRNAs. Also deacylates mischarged glycyl-tRNA(Ala), protecting cells against glycine mischarging by AlaRS. Acts via tRNA-based rather than protein-based catalysis; rejects L-amino acids rather than detecting D-amino acids in the active site. By recycling D-aminoacyl-tRNA to D-amino acids and free tRNA molecules, this enzyme counteracts the toxicity associated with the formation of D-aminoacyl-tRNA entities in vivo and helps enforce protein L-homochirality. The polypeptide is D-aminoacyl-tRNA deacylase (Thermoanaerobacter sp. (strain X514)).